The primary structure comprises 953 residues: Isoleucine--tRNA ligase (953 aa).

A 'HIGH' region motif is present at residues Pro-58–His-68. L-isoleucyl-5'-AMP is bound at residue Glu-573. The 'KMSKS' region motif lies at Lys-614–Ser-618. ATP is bound at residue Lys-617. Zn(2+)-binding residues include Cys-916, Cys-919, Cys-936, and Cys-939.

It belongs to the class-I aminoacyl-tRNA synthetase family. IleS type 1 subfamily. As to quaternary structure, monomer. Zn(2+) serves as cofactor.

Its subcellular location is the cytoplasm. The catalysed reaction is tRNA(Ile) + L-isoleucine + ATP = L-isoleucyl-tRNA(Ile) + AMP + diphosphate. In terms of biological role, catalyzes the attachment of isoleucine to tRNA(Ile). As IleRS can inadvertently accommodate and process structurally similar amino acids such as valine, to avoid such errors it has two additional distinct tRNA(Ile)-dependent editing activities. One activity is designated as 'pretransfer' editing and involves the hydrolysis of activated Val-AMP. The other activity is designated 'posttransfer' editing and involves deacylation of mischarged Val-tRNA(Ile). This Blochmanniella floridana protein is Isoleucine--tRNA ligase.